The following is a 500-amino-acid chain: Lysine--tRNA ligase (500 aa).

Residues Glu-410 and Glu-417 each contribute to the Mg(2+) site.

The protein belongs to the class-II aminoacyl-tRNA synthetase family. As to quaternary structure, homodimer. It depends on Mg(2+) as a cofactor.

The protein localises to the cytoplasm. It carries out the reaction tRNA(Lys) + L-lysine + ATP = L-lysyl-tRNA(Lys) + AMP + diphosphate. The chain is Lysine--tRNA ligase from Pseudomonas putida (strain W619).